A 116-amino-acid chain; its full sequence is Large ribosomal subunit protein eL30 (116 aa).

It belongs to the eukaryotic ribosomal protein eL30 family. In terms of assembly, component of the large ribosomal subunit.

It is found in the cytoplasm. Its function is as follows. Component of the large ribosomal subunit. The ribosome is a large ribonucleoprotein complex responsible for the synthesis of proteins in the cell. The chain is Large ribosomal subunit protein eL30 (rpl30) from Ictalurus punctatus (Channel catfish).